We begin with the raw amino-acid sequence, 362 residues long: Glutamate--cysteine ligase (362 aa).

This sequence belongs to the glutamate--cysteine ligase type 2 family. YbdK subfamily.

It catalyses the reaction L-cysteine + L-glutamate + ATP = gamma-L-glutamyl-L-cysteine + ADP + phosphate + H(+). Its function is as follows. Catalyzes the synthesis of gamma-glutamylcysteine (gamma-GC), the main low-molecular-weight thiol compound instead of glutathione in halophilic archaea. In Natronomonas pharaonis (strain ATCC 35678 / DSM 2160 / CIP 103997 / JCM 8858 / NBRC 14720 / NCIMB 2260 / Gabara) (Halobacterium pharaonis), this protein is Glutamate--cysteine ligase.